The sequence spans 405 residues: Cytochrome P450 107B1 (405 aa).

C352 contributes to the heme binding site.

Belongs to the cytochrome P450 family. Heme serves as cofactor.

It is found in the cytoplasm. In terms of biological role, not known, probably involved in the catabolism of octane and guaiacol. It displays a weak activity in the O-dealkylation of 7-ethoxycoumarin. In Saccharopolyspora erythraea (strain ATCC 11635 / DSM 40517 / JCM 4748 / NBRC 13426 / NCIMB 8594 / NRRL 2338), this protein is Cytochrome P450 107B1 (cyp107B1).